The following is a 502-amino-acid chain: Reduced meiotic recombination protein C1442.04c (502 aa).

Phosphoserine occurs at positions 328, 330, and 331. 3 disordered regions span residues 353 to 391, 420 to 440, and 454 to 502; these read NDLNNEEPNSVVAEDGSEIITLDENDQSPNEATEKLRDN, GSLNNADLSQEPITNDGENVD, and ESAF…PSDD. The segment covering 367 to 378 has biased composition (acidic residues); sequence DGSEIITLDEND. Composition is skewed to polar residues over residues 420–436 and 462–477; these read GSLNNADLSQEPITNDG and GTINSSKRRLSVTTDT.

It belongs to the RMR1 family.

The protein resides in the cytoplasm. Its subcellular location is the nucleus. In terms of biological role, required for normal levels of gene conversion events during meiosis. The polypeptide is Reduced meiotic recombination protein C1442.04c (Schizosaccharomyces pombe (strain 972 / ATCC 24843) (Fission yeast)).